Here is a 51-residue protein sequence, read N- to C-terminus: Large ribosomal subunit protein eL39 (51 aa).

The protein belongs to the eukaryotic ribosomal protein eL39 family.

This Methanosarcina barkeri (strain Fusaro / DSM 804) protein is Large ribosomal subunit protein eL39.